The chain runs to 501 residues: Solute carrier family 2, facilitated glucose transporter member 5 (501 aa).

An N-acetylmethionine modification is found at Met1. At 1 to 17 the chain is on the cytoplasmic side; sequence MEEKHQEETGELTLVLA. A helical transmembrane segment spans residues 18 to 38; sequence LATLIAAFGSSFQYGYNVAAV. Position 31 (Tyr31) interacts with D-fructose. Topologically, residues 39–67 are extracellular; sequence NSPSEFMQQFYNDTYYDRNEENIESFTLT. An N-linked (GlcNAc...) asparagine glycan is attached at Asn50. The helical transmembrane segment at 68 to 90 threads the bilayer; it reads LLWSLTVSMFPFGGFIGSLMVGT. The Cytoplasmic segment spans residues 91-97; it reads LVNKLGR. The chain crosses the membrane as a helical span at residues 98–118; it reads KGALLFNNIFSILPAILMGCS. At 119-125 the chain is on the extracellular side; sequence QIAQSFE. Residues 126 to 148 form a helical membrane-spanning segment; the sequence is LIIISRLLVGICAGISSNVVPMY. The Cytoplasmic portion of the chain corresponds to 149–160; that stretch reads LGELAPKNLRGA. A helical transmembrane segment spans residues 161–181; sequence LGVVPQLFITVGILVAQLFGL. A D-fructose-binding site is contributed by Gln166. At 182-191 the chain is on the extracellular side; it reads RSLLANEDGW. The chain crosses the membrane as a helical span at residues 192-212; sequence PVLLGLTGVPAGLQLLLLPFF. The Cytoplasmic segment spans residues 213–276; sequence PESPRYLLIQ…LFTMQSLRWQ (64 aa). The helical transmembrane segment at 277–297 threads the bilayer; sequence LISMIVLMAGQQLSGVNAIYY. D-fructose is bound by residues Gln287 and 295–297; that span reads IYY. Over 298 to 312 the chain is Extracellular; sequence YADQIYLSAGVKSDD. The chain crosses the membrane as a helical span at residues 313–333; that stretch reads VQYVTAGTGAVNVFMTILTIF. Residues 334–341 are Cytoplasmic-facing; the sequence is VVELWGRR. The helical transmembrane segment at 342–362 threads the bilayer; sequence FLLLVGFSTCLIACLVLTAAL. Residues 363–370 lie on the Extracellular side of the membrane; the sequence is ALQNTISW. A helical membrane pass occupies residues 371–393; sequence MPYISIVCVIVYVIGHALGPSPI. His386 lines the D-fructose pocket. Over 394–411 the chain is Cytoplasmic; the sequence is PALLITEIFLQSSRPAAY. A helical membrane pass occupies residues 412–432; the sequence is MIGGSVHWLSNFTVGLIFPFI. Residue 418-419 coordinates D-fructose; it reads HW. The Extracellular portion of the chain corresponds to 433–438; that stretch reads QMGLGP. Residues 439–459 traverse the membrane as a helical segment; sequence YSFIIFATICFLTTIYIFMVV. Topologically, residues 460–501 are cytoplasmic; it reads PETKGRTFIEINQIFTMKNKVSDVYPKKEEELGALPHAILEQ.

It belongs to the major facilitator superfamily. Sugar transporter (TC 2.A.1.1) family. Glucose transporter subfamily. In terms of tissue distribution, detected at the apical membrane of villi in the jejunum. Detected in jejunum mucosa. Detected in epididymis and whole testis (at protein level). Detected in small intestine, kidney and testis. Detected in cochlea, but not in inner or outer cochlear hair cells.

The protein resides in the apical cell membrane. It is found in the cell membrane. The protein localises to the sarcolemma. The enzyme catalyses D-fructose(out) = D-fructose(in). Its activity is regulated as follows. Fructose uptake is inhibited by cytochalasin B. Its function is as follows. Functions as a fructose transporter that has only low activity with other monosaccharides. Can mediate the uptake of deoxyglucose, but with low efficiency. Essential for fructose uptake in the small intestine. Plays a role in the regulation of salt uptake and blood pressure in response to dietary fructose. Required for the development of high blood pressure in response to high dietary fructose intake. The chain is Solute carrier family 2, facilitated glucose transporter member 5 from Mus musculus (Mouse).